Reading from the N-terminus, the 578-residue chain is Ketol-acid reductoisomerase, chloroplastic (578 aa).

The transit peptide at 1-52 directs the protein to the chloroplast; the sequence is MAASTTLALSHPKTLAAAAAAAPKAPTAPAAVSFPVSHAACAPLAARRRAVT. The region spanning 90-288 is the KARI N-terminal Rossmann domain; sequence VRGGRNLFPL…ALGSPFTFAT (199 aa). NADP(+) contacts are provided by residues 111–118, 144–149, and 183–187; these read GVIGWGSQ, RKGSKS, and SDAAQ. Histidine 208 is an active-site residue. KARI C-terminal knotted domains lie at 289 to 437 and 438 to 574; these read TLEQ…RPEN and DLGP…RPEL. Mg(2+) contacts are provided by aspartate 297, glutamate 301, glutamate 474, and glutamate 478. A substrate-binding site is contributed by serine 500.

The protein belongs to the ketol-acid reductoisomerase family. In terms of assembly, homodimer. Mg(2+) is required as a cofactor.

Its subcellular location is the plastid. It is found in the chloroplast. It catalyses the reaction (2R)-2,3-dihydroxy-3-methylbutanoate + NADP(+) = (2S)-2-acetolactate + NADPH + H(+). It carries out the reaction (2R,3R)-2,3-dihydroxy-3-methylpentanoate + NADP(+) = (S)-2-ethyl-2-hydroxy-3-oxobutanoate + NADPH + H(+). It functions in the pathway amino-acid biosynthesis; L-isoleucine biosynthesis; L-isoleucine from 2-oxobutanoate: step 2/4. Its pathway is amino-acid biosynthesis; L-valine biosynthesis; L-valine from pyruvate: step 2/4. This is Ketol-acid reductoisomerase, chloroplastic from Oryza sativa subsp. japonica (Rice).